The chain runs to 391 residues: Immunoglobulin heavy constant alpha 2 (391 aa).

Topologically, residues 1-357 (ASPTSPKVFP…TPGANLWPTT (357 aa)) are extracellular. Ig-like domains lie at 6-98 (PKVF…QDVT), 112-207 (PRLS…ANIT), and 215-317 (PEVH…KTID). C26 and C85 are joined by a disulfide. A glycan (N-linked (GlcNAc...) asparagine) is linked at N47. The N-linked (GlcNAc...) (complex) asparagine glycan is linked to N92. 2 cysteine pairs are disulfide-bonded: C110/C167 and C134/C191. Residue N131 is glycosylated (N-linked (GlcNAc...) asparagine). N-linked (GlcNAc...) (complex) asparagine glycosylation occurs at N205. A disulfide bridge links C237 with C300. The N-linked (GlcNAc...) (complex) asparagine glycan is linked to D327. A helical membrane pass occupies residues 358-379 (ITFLTLFLLSLFYSTALTVTSV). Topologically, residues 380–391 (RGPSGKREGPQY) are cytoplasmic.

In terms of assembly, immunoglobulins are composed of two identical heavy chains and two identical light chains; disulfide-linked. Monomeric or polymeric. Part of the secretory IgA (sIgA) complex that consists of two, four or five IgA monomers, and two additional non-Ig polypeptides, namely the JCHAIN and the secretory component (the proteolytic product of PIGR).

It localises to the secreted. Its subcellular location is the cell membrane. In terms of biological role, constant region of immunoglobulin heavy chains. Immunoglobulins, also known as antibodies, are membrane-bound or secreted glycoproteins produced by B lymphocytes. In the recognition phase of humoral immunity, the membrane-bound immunoglobulins serve as receptors which, upon binding of a specific antigen, trigger the clonal expansion and differentiation of B lymphocytes into immunoglobulins-secreting plasma cells. Secreted immunoglobulins mediate the effector phase of humoral immunity, which results in the elimination of bound antigens. The antigen binding site is formed by the variable domain of one heavy chain, together with that of its associated light chain. Thus, each immunoglobulin has two antigen binding sites with remarkable affinity for a particular antigen. The variable domains are assembled by a process called V-(D)-J rearrangement and can then be subjected to somatic hypermutations which, after exposure to antigen and selection, allow affinity maturation for a particular antigen. Ig alpha is the major immunoglobulin class in body secretions. The polypeptide is Immunoglobulin heavy constant alpha 2 (Homo sapiens (Human)).